A 444-amino-acid polypeptide reads, in one-letter code: Glycogen synthase (444 aa).

An ADP-alpha-D-glucose-binding site is contributed by Arg15.

This sequence belongs to the glycosyltransferase 1 family. Bacterial/plant glycogen synthase subfamily.

The enzyme catalyses [(1-&gt;4)-alpha-D-glucosyl](n) + ADP-alpha-D-glucose = [(1-&gt;4)-alpha-D-glucosyl](n+1) + ADP + H(+). It functions in the pathway glycan biosynthesis; glycogen biosynthesis. Its function is as follows. Synthesizes alpha-1,4-glucan chains using ADP-glucose. The polypeptide is Glycogen synthase (Deinococcus radiodurans (strain ATCC 13939 / DSM 20539 / JCM 16871 / CCUG 27074 / LMG 4051 / NBRC 15346 / NCIMB 9279 / VKM B-1422 / R1)).